The primary structure comprises 126 residues: Major sperm protein 1 (126 aa).

Ala2 carries the N-acetylalanine modification. The MSP domain maps to 8–125 (DIATMPAQKV…RRKNLPIEYN (118 aa)).

Sperm.

The protein resides in the cell projection. It is found in the pseudopodium. The protein localises to the cytoplasm. It localises to the cytoskeleton. Functionally, central component in molecular interactions underlying sperm crawling. Forms an extensive filament system that extends from sperm villipoda, along the leading edge of the pseudopod. The chain is Major sperm protein 1 (MSP-1) from Globodera rostochiensis (Golden nematode worm).